Consider the following 97-residue polypeptide: Aspartyl/glutamyl-tRNA(Asn/Gln) amidotransferase subunit C (97 aa).

The protein belongs to the GatC family. As to quaternary structure, heterotrimer of A, B and C subunits.

It catalyses the reaction L-glutamyl-tRNA(Gln) + L-glutamine + ATP + H2O = L-glutaminyl-tRNA(Gln) + L-glutamate + ADP + phosphate + H(+). It carries out the reaction L-aspartyl-tRNA(Asn) + L-glutamine + ATP + H2O = L-asparaginyl-tRNA(Asn) + L-glutamate + ADP + phosphate + 2 H(+). Functionally, allows the formation of correctly charged Asn-tRNA(Asn) or Gln-tRNA(Gln) through the transamidation of misacylated Asp-tRNA(Asn) or Glu-tRNA(Gln) in organisms which lack either or both of asparaginyl-tRNA or glutaminyl-tRNA synthetases. The reaction takes place in the presence of glutamine and ATP through an activated phospho-Asp-tRNA(Asn) or phospho-Glu-tRNA(Gln). In Anaeromyxobacter dehalogenans (strain 2CP-C), this protein is Aspartyl/glutamyl-tRNA(Asn/Gln) amidotransferase subunit C.